The primary structure comprises 559 residues: Urocanate hydratase (559 aa).

Residues 50 to 51, Q128, 174 to 176, D194, R199, 240 to 241, 261 to 265, 271 to 272, and Y320 contribute to the NAD(+) site; these read GG, GMG, NA, QTSAH, and YI. C408 is a catalytic residue. G490 is a binding site for NAD(+).

It belongs to the urocanase family. It depends on NAD(+) as a cofactor.

The protein resides in the cytoplasm. The catalysed reaction is 4-imidazolone-5-propanoate = trans-urocanate + H2O. Its pathway is amino-acid degradation; L-histidine degradation into L-glutamate; N-formimidoyl-L-glutamate from L-histidine: step 2/3. Functionally, catalyzes the conversion of urocanate to 4-imidazolone-5-propionate. The sequence is that of Urocanate hydratase from Halalkalibacterium halodurans (strain ATCC BAA-125 / DSM 18197 / FERM 7344 / JCM 9153 / C-125) (Bacillus halodurans).